Consider the following 322-residue polypeptide: Eukaryotic translation initiation factor 3 subunit I (322 aa).

WD repeat units lie at residues 4–43 (GHER…RLGT), 46–85 (GHQG…IIAS), 141–180 (MTES…KVVD), 184–223 (DHTA…CLKT), and 281–322 (GHFG…NIFE).

This sequence belongs to the eIF-3 subunit I family. As to quaternary structure, component of the eukaryotic translation initiation factor 3 (eIF-3) complex. The eIF-3 complex interacts with pix.

The protein localises to the cytoplasm. In terms of biological role, component of the eukaryotic translation initiation factor 3 (eIF-3) complex, which is involved in protein synthesis of a specialized repertoire of mRNAs and, together with other initiation factors, stimulates binding of mRNA and methionyl-tRNAi to the 40S ribosome. The eIF-3 complex specifically targets and initiates translation of a subset of mRNAs involved in cell proliferation. The protein is Eukaryotic translation initiation factor 3 subunit I of Drosophila ananassae (Fruit fly).